A 338-amino-acid chain; its full sequence is MTQKKVAILGAGSWGTGLALVLADNNHKPVIWGNLDKIVNEINESHTNSHYLPDIILPTEVKATLSLDEAIDGAEIVVIAIPTNAMRVVCKQLNEALKEPTILVHVSKGIEPETNLRMSEVIEEEVDATKRKALVVLSGPSHAEEVALRHPTTLCASCKDLKAAEIVQDRFINNNLRIYTNDDVIGAEIGGALKNIIALGAGISDGLGYGDNAKAALMTRGMAEITRLGVAVGSNPQTFYGLTGIGDLIVTCTSVHSRNWRAGNMLGKGENLDEVLEKMGMVVEGVRTAKAVHGWAKKLDIDMPITESIYAILFENKDAREAVDLLMGRKKKIEKESF.

Positions 13, 14, and 108 each coordinate NADPH. Sn-glycerol 3-phosphate-binding residues include Lys-108, Gly-139, and Ser-141. Ala-143 serves as a coordination point for NADPH. Sn-glycerol 3-phosphate-binding residues include Lys-194, Asp-247, Ser-257, Arg-258, and Asn-259. Catalysis depends on Lys-194, which acts as the Proton acceptor. Arg-258 contributes to the NADPH binding site. The NADPH site is built by Val-282 and Glu-284.

It belongs to the NAD-dependent glycerol-3-phosphate dehydrogenase family.

The protein resides in the cytoplasm. It catalyses the reaction sn-glycerol 3-phosphate + NAD(+) = dihydroxyacetone phosphate + NADH + H(+). It carries out the reaction sn-glycerol 3-phosphate + NADP(+) = dihydroxyacetone phosphate + NADPH + H(+). Its pathway is membrane lipid metabolism; glycerophospholipid metabolism. Functionally, catalyzes the reduction of the glycolytic intermediate dihydroxyacetone phosphate (DHAP) to sn-glycerol 3-phosphate (G3P), the key precursor for phospholipid synthesis. This Listeria innocua serovar 6a (strain ATCC BAA-680 / CLIP 11262) protein is Glycerol-3-phosphate dehydrogenase [NAD(P)+].